We begin with the raw amino-acid sequence, 337 residues long: Methylthioribose-1-phosphate isomerase (337 aa).

Residues 47–49 (RGA), Arg81, and Gln184 each bind substrate. Residue Asp225 is the Proton donor of the active site. 235 to 236 (NK) contributes to the substrate binding site.

Belongs to the eIF-2B alpha/beta/delta subunits family. MtnA subfamily.

It catalyses the reaction 5-(methylsulfanyl)-alpha-D-ribose 1-phosphate = 5-(methylsulfanyl)-D-ribulose 1-phosphate. Its pathway is amino-acid biosynthesis; L-methionine biosynthesis via salvage pathway; L-methionine from S-methyl-5-thio-alpha-D-ribose 1-phosphate: step 1/6. Functionally, catalyzes the interconversion of methylthioribose-1-phosphate (MTR-1-P) into methylthioribulose-1-phosphate (MTRu-1-P). The polypeptide is Methylthioribose-1-phosphate isomerase (Parasynechococcus marenigrum (strain WH8102)).